The primary structure comprises 200 residues: Superoxide dismutase [Fe] (200 aa).

Fe cation contacts are provided by His28, His80, Asp162, and His166.

The protein belongs to the iron/manganese superoxide dismutase family. As to quaternary structure, homodimer. It depends on Fe cation as a cofactor.

The catalysed reaction is 2 superoxide + 2 H(+) = H2O2 + O2. In terms of biological role, destroys superoxide anion radicals which are normally produced within the cells and which are toxic to biological systems. The polypeptide is Superoxide dismutase [Fe] (sodB) (Nostoc sp. (strain PCC 7120 / SAG 25.82 / UTEX 2576)).